The following is a 210-amino-acid chain: Na(+)-translocating NADH-quinone reductase subunit D (210 aa).

6 helical membrane-spanning segments follow: residues 14–34, 42–62, 72–92, 103–123, 131–151, and 178–198; these read PIVS…ALAV, LVMT…ISIL, IIVQ…VLQA, VFVG…AYAM, FMDG…VGFI, and NGLL…IWII.

Belongs to the NqrDE/RnfAE family. Composed of six subunits; NqrA, NqrB, NqrC, NqrD, NqrE and NqrF.

Its subcellular location is the cell inner membrane. It carries out the reaction a ubiquinone + n Na(+)(in) + NADH + H(+) = a ubiquinol + n Na(+)(out) + NAD(+). NQR complex catalyzes the reduction of ubiquinone-1 to ubiquinol by two successive reactions, coupled with the transport of Na(+) ions from the cytoplasm to the periplasm. NqrA to NqrE are probably involved in the second step, the conversion of ubisemiquinone to ubiquinol. The chain is Na(+)-translocating NADH-quinone reductase subunit D from Shewanella halifaxensis (strain HAW-EB4).